Here is a 189-residue protein sequence, read N- to C-terminus: Glycerol-3-phosphate acyltransferase (189 aa).

5 helical membrane-spanning segments follow: residues 1-21 (MFWL…AILL), 51-71 (LAVL…LIAH), 77-97 (LQQQ…PLYF), 111-131 (MLLG…ALTF), and 151-171 (LLAW…LLIV).

This sequence belongs to the PlsY family. Probably interacts with PlsX.

The protein resides in the cell inner membrane. The enzyme catalyses an acyl phosphate + sn-glycerol 3-phosphate = a 1-acyl-sn-glycero-3-phosphate + phosphate. It functions in the pathway lipid metabolism; phospholipid metabolism. Functionally, catalyzes the transfer of an acyl group from acyl-phosphate (acyl-PO(4)) to glycerol-3-phosphate (G3P) to form lysophosphatidic acid (LPA). This enzyme utilizes acyl-phosphate as fatty acyl donor, but not acyl-CoA or acyl-ACP. In Pseudomonas fluorescens (strain ATCC BAA-477 / NRRL B-23932 / Pf-5), this protein is Glycerol-3-phosphate acyltransferase.